Reading from the N-terminus, the 72-residue chain is Small proline-rich protein 2B (72 aa).

Residues 1 to 11 (MSYQQQQCKQP) show a composition bias toward low complexity. The disordered stretch occupies residues 1–20 (MSYQQQQCKQPCQPPPVCPT). A run of 3 repeats spans residues 21–29 (PKCPEPCPP), 30–38 (PKCPEPCPP), and 39–47 (PKCPQPCPP). A 3 X 9 AA tandem repeats of P-K-C-P-[EQ]-P-C-P-P region spans residues 21 to 47 (PKCPEPCPPPKCPEPCPPPKCPQPCPP). The interval 42–72 (PQPCPPQQCQQKYPPVTPSPPCQPKYPPKSK) is disordered. Pro residues predominate over residues 56–72 (PVTPSPPCQPKYPPKSK).

The protein belongs to the cornifin (SPRR) family. As to expression, suprabasal layers of squamous-differentiated tissues such as epidermis, esophagus, tongue and trachea.

It is found in the cytoplasm. In terms of biological role, cross-linked envelope protein of keratinocytes. It is a keratinocyte protein that first appears in the cell cytosol, but ultimately becomes cross-linked to membrane proteins by transglutaminase. All that results in the formation of an insoluble envelope beneath the plasma membrane. This Homo sapiens (Human) protein is Small proline-rich protein 2B (SPRR2B).